The sequence spans 398 residues: 1-deoxy-D-xylulose 5-phosphate reductoisomerase (398 aa).

NADPH-binding residues include T10, G11, S12, I13, K37, N38, and N124. K125 is a 1-deoxy-D-xylulose 5-phosphate binding site. E126 contributes to the NADPH binding site. D150 contacts Mn(2+). 1-deoxy-D-xylulose 5-phosphate contacts are provided by S151, E152, S186, and H209. E152 is a binding site for Mn(2+). G215 serves as a coordination point for NADPH. 1-deoxy-D-xylulose 5-phosphate-binding residues include S222, N227, K228, and E231. E231 is a Mn(2+) binding site.

This sequence belongs to the DXR family. As to quaternary structure, homodimer. Requires Mg(2+) as cofactor. The cofactor is Mn(2+).

The catalysed reaction is 2-C-methyl-D-erythritol 4-phosphate + NADP(+) = 1-deoxy-D-xylulose 5-phosphate + NADPH + H(+). It participates in isoprenoid biosynthesis; isopentenyl diphosphate biosynthesis via DXP pathway; isopentenyl diphosphate from 1-deoxy-D-xylulose 5-phosphate: step 1/6. Functionally, catalyzes the NADPH-dependent rearrangement and reduction of 1-deoxy-D-xylulose-5-phosphate (DXP) to 2-C-methyl-D-erythritol 4-phosphate (MEP). The chain is 1-deoxy-D-xylulose 5-phosphate reductoisomerase from Buchnera aphidicola subsp. Schizaphis graminum (strain Sg).